Consider the following 72-residue polypeptide: Large ribosomal subunit protein bL31 (72 aa).

Zn(2+) contacts are provided by C16, C18, C37, and C40.

The protein belongs to the bacterial ribosomal protein bL31 family. Type A subfamily. Part of the 50S ribosomal subunit. It depends on Zn(2+) as a cofactor.

Functionally, binds the 23S rRNA. The sequence is that of Large ribosomal subunit protein bL31 from Pseudomonas fluorescens (strain Pf0-1).